The sequence spans 609 residues: MSPPRDRVDAYYKDNFQFKNTRVVLNKEQLLIERPCMLLTVLFVMFLSLVGLLAIAGIRLHRAAVNTAKINNDLTTSIDITKSIEYQVKDVLTPLFKIIGDEVGLRTPQRFTDLTKFISDKIKFLNPDKEYDFRDINWCINPPERIKIDYDQYCAHTAAEDLITMLVNSSLTGTTVPRTSLVNLGRNCTGPTTTKGQFSNISLTLSGIYSGRGYNISSMITITGKGMYGSTYLVGKYNQRARRPSKVWHQDYRVFEVGIIRELGVGTPGFHMTNYLELPRQPELETCMLALGESKLAALCLADSPVALHYGRVGDDNKIRFVKLGVWASPADRDTLATLSAIDPTLDGLYITTHRGIIAAGTAIWAVPVTRTDDQVKMGKCRLEACRDRPPPFCNSTDWEPLEAGRIPAYGVLTIKLGLADEPKVDIISEFGPLITHDSGMDLYTSFDGTKYWLTTPPLQNSALGTVNTLVLEPSLKISPNILTLPIRSGGGDCYIPTYLSDRADDDVKLSSNLVILPSRDLQYVSATYDISRVEHAIVYHIYSTGRLSSYYYPFKLPIKGDPVSLQIECFPWDRKLWCHHFCSVVDSGTGEQVTHIGVVGIKITCNGK.

Topologically, residues 1-34 (MSPPRDRVDAYYKDNFQFKNTRVVLNKEQLLIER) are intravirion. Residues 35 to 58 (PCMLLTVLFVMFLSLVGLLAIAGI) traverse the membrane as a helical; Signal-anchor for type II membrane protein segment. Residues 59 to 609 (RLHRAAVNTA…VGIKITCNGK (551 aa)) lie on the Virion surface side of the membrane. N-linked (GlcNAc...) asparagine; by host glycosylation is found at N168, N187, N200, N215, and N395.

The protein belongs to the paramyxoviruses hemagglutinin-neuraminidase family. Non-sialidase subfamily.

The protein resides in the virion membrane. It localises to the host membrane. Its function is as follows. Attaches the virus to cell receptors and thereby initiating infection. Binding of H protein to the receptor induces a conformational change that allows the F protein to trigger virion/cell membranes fusion. Down-regulates human MCP/CD46 cell surface expression. The chain is Hemagglutinin glycoprotein (H) from Bos indicus (Zebu).